Reading from the N-terminus, the 271-residue chain is ATP synthase subunit a (271 aa).

The next 5 membrane-spanning stretches (helical) occupy residues 40 to 60 (TINI…LVLF), 100 to 120 (LIAP…LMDL), 146 to 166 (DVNV…FYSI), 220 to 240 (LIFI…LNVP), and 242 to 262 (AIFH…LTIV).

Belongs to the ATPase A chain family. In terms of assembly, F-type ATPases have 2 components, CF(1) - the catalytic core - and CF(0) - the membrane proton channel. CF(1) has five subunits: alpha(3), beta(3), gamma(1), delta(1), epsilon(1). CF(0) has three main subunits: a(1), b(2) and c(9-12). The alpha and beta chains form an alternating ring which encloses part of the gamma chain. CF(1) is attached to CF(0) by a central stalk formed by the gamma and epsilon chains, while a peripheral stalk is formed by the delta and b chains.

The protein localises to the cell inner membrane. Functionally, key component of the proton channel; it plays a direct role in the translocation of protons across the membrane. The sequence is that of ATP synthase subunit a from Escherichia coli O8 (strain IAI1).